Here is a 178-residue protein sequence, read N- to C-terminus: Large ribosomal subunit protein uL5 (178 aa).

Belongs to the universal ribosomal protein uL5 family. In terms of assembly, part of the 50S ribosomal subunit; part of the 5S rRNA/L5/L18/L25 subcomplex. Contacts the 5S rRNA and the P site tRNA. Forms a bridge to the 30S subunit in the 70S ribosome.

Functionally, this is one of the proteins that bind and probably mediate the attachment of the 5S RNA into the large ribosomal subunit, where it forms part of the central protuberance. In the 70S ribosome it contacts protein S13 of the 30S subunit (bridge B1b), connecting the 2 subunits; this bridge is implicated in subunit movement. Contacts the P site tRNA; the 5S rRNA and some of its associated proteins might help stabilize positioning of ribosome-bound tRNAs. The polypeptide is Large ribosomal subunit protein uL5 (Acinetobacter baylyi (strain ATCC 33305 / BD413 / ADP1)).